Consider the following 335-residue polypeptide: Karyogamy protein KAR4 (335 aa).

The segment at Met1–Asn25 is disordered. A compositionally biased stretch (polar residues) spans Ile16–Asn25.

The protein belongs to the MT-A70-like family. Component of the MIS (mRNA N6-methyladenosine (m6A) methylation) complex, at least composed of IME4, KAR4, MUM2, SLZ1, and VIR1. Interacts with VIR1.

Its subcellular location is the nucleus. The protein localises to the cytoplasm. Its function is as follows. Component of the MIS complex, a complex that mediates N6-methyladenosine (m6A) methylation of meiotic mRNAs and is required for initiation of meiosis, progression through the meiotic divisions and sporulation. May assist STE12 in the pheromone-dependent expression of KAR3 and CIK1. The polypeptide is Karyogamy protein KAR4 (KAR4) (Saccharomyces cerevisiae (strain ATCC 204508 / S288c) (Baker's yeast)).